Consider the following 421-residue polypeptide: CaM kinase-like vesicle-associated protein (421 aa).

A Protein kinase domain is found at 24–284 (YDLGQVVKSE…AQEAIAHEWI (261 aa)). The disordered stretch occupies residues 326–421 (ASEQGDTGAS…PQMLPQRKGY (96 aa)). 2 stretches are compositionally biased toward low complexity: residues 330 to 340 (GDTGASGLAAG) and 390 to 406 (QQQAQQQQQAQQQQQAR).

Belongs to the protein kinase superfamily. CAMK Ser/Thr protein kinase family. Interacts with calmodulin, in the presence of calcium. It depends on Ca(2+) as a cofactor. As to expression, ubiquitously expressed.

It is found in the cytoplasmic vesicle membrane. Functionally, does not appear to have detectable kinase activity. The polypeptide is CaM kinase-like vesicle-associated protein (camkv) (Takifugu rubripes (Japanese pufferfish)).